The following is a 234-amino-acid chain: BTB/POZ domain-containing protein KCTD5 (234 aa).

At A2 the chain carries N-acetylalanine. Residues 44-146 form the BTB domain; sequence KWVRLNVGGT…LVKDKIRERD (103 aa). Positions 213 to 234 are disordered; sequence PYGTTSEPSEKAKILQERGSRM. Residues 220-234 show a composition bias toward basic and acidic residues; it reads PSEKAKILQERGSRM.

In terms of assembly, homopentamer. Interacts (via C-terminus) with GRASP55/GORASP2. Interacts with CUL3 and with ubiquitinated proteins. Interacts with CRY1.

The protein localises to the cytoplasm. It localises to the cytosol. It is found in the nucleus. Functionally, its interaction with CUL3 suggests that it may act as a substrate adapter in some E3 ligase complex. Does not affect the function of Kv channel Kv2.1/KCNB1, Kv1.2/KCNA2, Kv4.2/KCND2 and Kv3.4/KCNC4. The sequence is that of BTB/POZ domain-containing protein KCTD5 (Kctd5) from Mus musculus (Mouse).